The sequence spans 345 residues: Centromere protein L (345 aa).

Phosphoserine is present on residues Ser-40 and Ser-54.

The protein belongs to the CENP-L/IML3 family. Component of the CENPA-CAD complex, composed of CENPI, CENPK, CENPL, CENPO, CENPP, CENPQ, CENPR and CENPS. The CENPA-CAD complex interacts with the CENPA-NAC complex, at least composed of CENPA, CENPC, CENPH, CENPM, CENPN, CENPT and CENPU.

The protein localises to the nucleus. It localises to the chromosome. Its subcellular location is the centromere. In terms of biological role, component of the CENPA-CAD (nucleosome distal) complex, a complex recruited to centromeres which is involved in assembly of kinetochore proteins, mitotic progression and chromosome segregation. May be involved in incorporation of newly synthesized CENPA into centromeres via its interaction with the CENPA-NAC complex. In Rattus norvegicus (Rat), this protein is Centromere protein L (Cenpl).